The chain runs to 184 residues: ATP-dependent protease subunit HslV (184 aa).

Threonine 2 is a catalytic residue. Na(+)-binding residues include glycine 157, cysteine 160, and threonine 163.

It belongs to the peptidase T1B family. HslV subfamily. A double ring-shaped homohexamer of HslV is capped on each side by a ring-shaped HslU homohexamer. The assembly of the HslU/HslV complex is dependent on binding of ATP.

The protein resides in the cytoplasm. It carries out the reaction ATP-dependent cleavage of peptide bonds with broad specificity.. With respect to regulation, allosterically activated by HslU binding. Its function is as follows. Protease subunit of a proteasome-like degradation complex believed to be a general protein degrading machinery. The polypeptide is ATP-dependent protease subunit HslV (Vibrio vulnificus (strain CMCP6)).